Consider the following 1020-residue polypeptide: Probable beta-galactosidase B (1020 aa).

The first 22 residues, 1 to 22 (MLISKTVLSGLALGASFVGVSA), serve as a signal peptide directing secretion. N-linked (GlcNAc...) asparagine glycosylation is present at Asn25. A substrate-binding site is contributed by Tyr90. A glycan (N-linked (GlcNAc...) asparagine) is linked at Asn111. Residues Asn135, Ala136, and Glu137 each coordinate substrate. A glycan (N-linked (GlcNAc...) asparagine) is linked at Asn172. Residue Asn195 coordinates substrate. Glu196 serves as the catalytic Proton donor. Asn210 and Asn251 each carry an N-linked (GlcNAc...) asparagine glycan. Tyr264 is a binding site for substrate. Cysteines 270 and 323 form a disulfide. Asn271 carries N-linked (GlcNAc...) asparagine glycosylation. Catalysis depends on Glu307, which acts as the Nucleophile. Tyr372 contributes to the substrate binding site. Asn410, Asn455, Asn549, Asn596, Asn625, Asn702, Asn747, Asn785, Asn819, Asn880, and Asn919 each carry an N-linked (GlcNAc...) asparagine glycan.

This sequence belongs to the glycosyl hydrolase 35 family.

Its subcellular location is the secreted. It catalyses the reaction Hydrolysis of terminal non-reducing beta-D-galactose residues in beta-D-galactosides.. In terms of biological role, cleaves beta-linked terminal galactosyl residues from gangliosides, glycoproteins, and glycosaminoglycans. In Aspergillus flavus (strain ATCC 200026 / FGSC A1120 / IAM 13836 / NRRL 3357 / JCM 12722 / SRRC 167), this protein is Probable beta-galactosidase B (lacB).